We begin with the raw amino-acid sequence, 566 residues long: Beta-1,4 N-acetylgalactosaminyltransferase 2 (566 aa).

Residues 1–22 (MGSAGFSVGKFHVEVASRGREC) form an ER exit and post-Golgi subcellular localization region. Topologically, residues 1-67 (MGSAGFSVGK…HGRSRRQGSR (67 aa)) are cytoplasmic. The Vesicular targeting signature appears at 9-15 (GKFHVEV). A helical; Signal-anchor for type II membrane protein transmembrane segment spans residues 68 to 88 (FLWLLKILVIILVLGIVGFMF). Over 89-566 (GSMFLQAVFS…YFKNHLQCAA (478 aa)) the chain is Lumenal.

Belongs to the glycosyltransferase 2 family. As to quaternary structure, homodimer; disulfide-linked. As to expression, widely expressed. Highly expressed in colon and to a lesser extent in kidney, stomach, ileum and rectum.

It localises to the golgi apparatus. The protein localises to the trans-Golgi network membrane. The protein resides in the cytoplasmic vesicle membrane. The enzyme catalyses an N-acetyl-alpha-neuraminyl-(2-&gt;3)-beta-D-galactosyl derivative + UDP-N-acetyl-alpha-D-galactosamine = an N-acetyl-beta-D-galactosaminyl-(1-&gt;4)-[N-acetyl-alpha-neuraminyl-(2-&gt;3)]-beta-D-galactosyl derivative + UDP + H(+). It carries out the reaction a 3-O-{alpha-Neu5Ac-(2-&gt;3)-beta-D-Gal-(1-&gt;3)-[alpha-Neu5Ac-(2-&gt;6)]-alpha-D-GalNAc}-L-seryl-[protein] + UDP-N-acetyl-alpha-D-galactosamine = a 3-O-{[alpha-Neu5Ac-(2-&gt;3)]-beta-D-GalNAc-(1-&gt;4)-beta-D-Gal-(1-&gt;3)-[alpha-Neu5Ac-(2-&gt;6)]-alpha-D-GalNAc}-L-seryl-[protein] + UDP + H(+). The catalysed reaction is a 3-O-{alpha-Neu5Ac-(2-&gt;3)-beta-D-Gal-(1-&gt;3)-[alpha-Neu5Ac-(2-&gt;6)]-alpha-D-GalNAc}-L-threonyl-[protein] + UDP-N-acetyl-alpha-D-galactosamine = a 3-O-{[alpha-Neu5Ac-(2-&gt;3)]-beta-D-GalNAc-(1-&gt;4)-beta-D-Gal-(1-&gt;3)-[alpha-Neu5Ac-(2-&gt;6)]-alpha-D-GalNAc}-L-threonyl-[protein] + UDP + H(+). It catalyses the reaction a neolactoside IV(3)-alpha-NeuAc-nLc4Cer + UDP-N-acetyl-alpha-D-galactosamine = a neolactoside IV(4)-GalNAc,IV(3)-alpha-NeuAc-nLc4Cer + UDP + H(+). Its pathway is protein modification; protein glycosylation. It functions in the pathway glycolipid biosynthesis. Beta-1,4 N-acetylgalactosaminyltransferase involved in the biosynthesis of Sd(a) histo-blood group antigen. Catalyzes the transfer of N-acetylgalactosamine (GalNAc) group in a beta-1,4-linkage from UDP-GalNAc to the galactose residue of NeuAcalpha2-&gt;3Gal-R to form Sd(a) glycan epitope GalNAcbeta1-&gt;4(NeuAcalpha2-&gt;3)Gal-R. The Sd(a) epitope is carried in O- and N-linked glycoproteins and glycolipids, including O-linked core 1 structures on GYPA/glycophorin, SLC4A1 and SLC29A1 in erythrocytes, N-linked glycans attached to the Tamm-Horsfall glycoprotein UMOD/uromodulin in renal fluids, O-linked core 3 glycans on mucins in colon and neolactosides in gastric mucosa. Confers protection against influenza A virus strains that attach to NeuAcalpha2-&gt;3-carrying host receptors. Modifies N-glycan chains on host receptors and prevents virus entry into cells. In Homo sapiens (Human), this protein is Beta-1,4 N-acetylgalactosaminyltransferase 2.